A 749-amino-acid polypeptide reads, in one-letter code: Ribosomal RNA large subunit methyltransferase K/L (749 aa).

Residues 43 to 154 (QGYKVCLWSR…KDKATIYLDL (112 aa)) enclose the THUMP domain. Positions 386 to 406 (VEPVAPKKTNKETPEPINPWT) are disordered.

Belongs to the methyltransferase superfamily. RlmKL family.

The protein resides in the cytoplasm. The enzyme catalyses guanosine(2445) in 23S rRNA + S-adenosyl-L-methionine = N(2)-methylguanosine(2445) in 23S rRNA + S-adenosyl-L-homocysteine + H(+). It catalyses the reaction guanosine(2069) in 23S rRNA + S-adenosyl-L-methionine = N(2)-methylguanosine(2069) in 23S rRNA + S-adenosyl-L-homocysteine + H(+). In terms of biological role, specifically methylates the guanine in position 2445 (m2G2445) and the guanine in position 2069 (m7G2069) of 23S rRNA. This chain is Ribosomal RNA large subunit methyltransferase K/L, found in Psychromonas ingrahamii (strain DSM 17664 / CCUG 51855 / 37).